The following is a 132-amino-acid chain: Small ribosomal subunit protein uS8 (132 aa).

Belongs to the universal ribosomal protein uS8 family. Part of the 30S ribosomal subunit. Contacts proteins S5 and S12.

Its function is as follows. One of the primary rRNA binding proteins, it binds directly to 16S rRNA central domain where it helps coordinate assembly of the platform of the 30S subunit. The sequence is that of Small ribosomal subunit protein uS8 from Bartonella tribocorum (strain CIP 105476 / IBS 506).